Reading from the N-terminus, the 256-residue chain is tRNA (guanine-N(7)-)-methyltransferase (256 aa).

Positions 85, 110, 137, and 159 each coordinate S-adenosyl-L-methionine. Asp-159 is an active-site residue. The substrate site is built by Lys-163 and Asp-195.

Belongs to the class I-like SAM-binding methyltransferase superfamily. TrmB family.

The catalysed reaction is guanosine(46) in tRNA + S-adenosyl-L-methionine = N(7)-methylguanosine(46) in tRNA + S-adenosyl-L-homocysteine. It functions in the pathway tRNA modification; N(7)-methylguanine-tRNA biosynthesis. Catalyzes the formation of N(7)-methylguanine at position 46 (m7G46) in tRNA. This is tRNA (guanine-N(7)-)-methyltransferase from Rhodopseudomonas palustris (strain BisB5).